Consider the following 218-residue polypeptide: Vacuolar protein-sorting-associated protein 37 homolog 2 (218 aa).

Residues 1–51 (MFNFWGSKEQQQGQSRPSPEASATPWYSPSLVTSPSSSRPQTSGQIPSHVS) form a disordered region. Residues 8 to 17 (KEQQQGQSRP) are compositionally biased toward polar residues. Over residues 28-40 (SPSLVTSPSSSRP) the composition is skewed to low complexity. In terms of domain architecture, VPS37 C-terminal spans 137-218 (QEKLNELENQ…HLAAKTSSIG (82 aa)).

It belongs to the VPS37 family. In terms of assembly, component of the endosomal sorting required for transport complex I (ESCRT-I), composed of ELC, VPS28 and VPS37. Interacts with ELC.

It localises to the endosome. Its function is as follows. Component of the ESCRT-I complex (endosomal sorting complex required for transport I), a regulator of vesicular trafficking process. Required for the sorting of endocytic ubiquitinated cargos into multivesicular bodies (MVBs). The protein is Vacuolar protein-sorting-associated protein 37 homolog 2 (VPS37-2) of Arabidopsis thaliana (Mouse-ear cress).